A 101-amino-acid polypeptide reads, in one-letter code: uncharacterized protein (101 aa).

The protein localises to the plastid. Its subcellular location is the chloroplast. This is an uncharacterized protein from Chlamydomonas reinhardtii (Chlamydomonas smithii).